A 284-amino-acid polypeptide reads, in one-letter code: Tryptophan 2,3-dioxygenase (284 aa).

Substrate-binding positions include 51-55 (FIIQH), Tyr-113, and Arg-117. His-240 contributes to the heme binding site. Position 254 (Thr-254) interacts with substrate.

The protein belongs to the tryptophan 2,3-dioxygenase family. In terms of assembly, homotetramer. It depends on heme as a cofactor.

It carries out the reaction L-tryptophan + O2 = N-formyl-L-kynurenine. It participates in amino-acid degradation; L-tryptophan degradation via kynurenine pathway; L-kynurenine from L-tryptophan: step 1/2. Heme-dependent dioxygenase that catalyzes the oxidative cleavage of the L-tryptophan (L-Trp) pyrrole ring and converts L-tryptophan to N-formyl-L-kynurenine. Catalyzes the oxidative cleavage of the indole moiety. The protein is Tryptophan 2,3-dioxygenase of Rhodococcus jostii (strain RHA1).